The sequence spans 134 residues: Global transcriptional regulator Spx (134 aa).

A disulfide bridge links Cys10 with Cys13.

It belongs to the ArsC family. Spx subfamily. In terms of assembly, interacts with the C-terminal domain of the alpha subunit of the RNAP.

It is found in the cytoplasm. Its function is as follows. Global transcriptional regulator that plays a key role in stress response and exerts either positive or negative regulation of genes. Acts by interacting with the C-terminal domain of the alpha subunit of the RNA polymerase (RNAP). This interaction can enhance binding of RNAP to the promoter region of target genes and stimulate their transcription, or block interaction of RNAP with activator. This is Global transcriptional regulator Spx from Streptococcus pyogenes serotype M6 (strain ATCC BAA-946 / MGAS10394).